A 59-amino-acid chain; its full sequence is Large ribosomal subunit protein uL30 (59 aa).

It belongs to the universal ribosomal protein uL30 family. Part of the 50S ribosomal subunit.

The sequence is that of Large ribosomal subunit protein uL30 from Nocardia farcinica (strain IFM 10152).